A 255-amino-acid polypeptide reads, in one-letter code: Trans-aconitate 2-methyltransferase (255 aa).

Belongs to the methyltransferase superfamily. Tam family.

The protein localises to the cytoplasm. The catalysed reaction is trans-aconitate + S-adenosyl-L-methionine = (E)-3-(methoxycarbonyl)pent-2-enedioate + S-adenosyl-L-homocysteine. Catalyzes the S-adenosylmethionine monomethyl esterification of trans-aconitate. This Mycolicibacterium gilvum (strain PYR-GCK) (Mycobacterium gilvum (strain PYR-GCK)) protein is Trans-aconitate 2-methyltransferase.